The chain runs to 248 residues: Probable transcriptional regulatory protein Rsph17025_0577 (248 aa).

The tract at residues 1-21 (MAGHSKWANIQHRKGKQDKLR) is disordered.

It belongs to the TACO1 family.

The protein resides in the cytoplasm. In Cereibacter sphaeroides (strain ATCC 17025 / ATH 2.4.3) (Rhodobacter sphaeroides), this protein is Probable transcriptional regulatory protein Rsph17025_0577.